The primary structure comprises 262 residues: Cytochrome c oxidase subunit 3 (262 aa).

A run of 6 helical transmembrane segments spans residues 39 to 59, 83 to 103, 120 to 140, 163 to 183, 201 to 221, and 240 to 260; these read YTMT…YQWW, GMIL…WAFF, VGII…ILLA, GLFF…YEYI, ATGF…ICFL, and AWYW…IYWW.

The protein belongs to the cytochrome c oxidase subunit 3 family. In terms of assembly, component of the cytochrome c oxidase (complex IV, CIV), a multisubunit enzyme composed of a catalytic core of 3 subunits and several supernumerary subunits. The complex exists as a monomer or a dimer and forms supercomplexes (SCs) in the inner mitochondrial membrane with ubiquinol-cytochrome c oxidoreductase (cytochrome b-c1 complex, complex III, CIII).

Its subcellular location is the mitochondrion inner membrane. It catalyses the reaction 4 Fe(II)-[cytochrome c] + O2 + 8 H(+)(in) = 4 Fe(III)-[cytochrome c] + 2 H2O + 4 H(+)(out). Its function is as follows. Component of the cytochrome c oxidase, the last enzyme in the mitochondrial electron transport chain which drives oxidative phosphorylation. The respiratory chain contains 3 multisubunit complexes succinate dehydrogenase (complex II, CII), ubiquinol-cytochrome c oxidoreductase (cytochrome b-c1 complex, complex III, CIII) and cytochrome c oxidase (complex IV, CIV), that cooperate to transfer electrons derived from NADH and succinate to molecular oxygen, creating an electrochemical gradient over the inner membrane that drives transmembrane transport and the ATP synthase. Cytochrome c oxidase is the component of the respiratory chain that catalyzes the reduction of oxygen to water. Electrons originating from reduced cytochrome c in the intermembrane space (IMS) are transferred via the dinuclear copper A center (CU(A)) of subunit 2 and heme A of subunit 1 to the active site in subunit 1, a binuclear center (BNC) formed by heme A3 and copper B (CU(B)). The BNC reduces molecular oxygen to 2 water molecules using 4 electrons from cytochrome c in the IMS and 4 protons from the mitochondrial matrix. The protein is Cytochrome c oxidase subunit 3 (COIII) of Anopheles quadrimaculatus (Common malaria mosquito).